The primary structure comprises 146 residues: VHLSGEEKACVTGLWGKVNEDEVGAEALGRLLVVYPWTQRFFDSFGDLSSASAVMGNPKVKAHGKKVLHSLGEGVANLDNLKGTFAKLSELHCDKLHVDPENFRLLGNVLVVVLASKFGKEFTPPVQAAFQKVVAGVANALAHKYH.

N-acetylvaline is present on valine 1. Residues 2 to 146 (HLSGEEKACV…VANALAHKYH (145 aa)) enclose the Globin domain. Phosphothreonine is present on threonine 12. Serine 44 is modified (phosphoserine). Residue lysine 59 is modified to N6-acetyllysine. A heme b-binding site is contributed by histidine 63. N6-acetyllysine is present on lysine 82. Histidine 92 contacts heme b. Cysteine 93 carries the post-translational modification S-nitrosocysteine. Lysine 144 is modified (N6-acetyllysine).

Belongs to the globin family. In terms of assembly, heterotetramer of two alpha chains and two beta chains. Red blood cells.

Involved in oxygen transport from the lung to the various peripheral tissues. In Suncus murinus (Asian house shrew), this protein is Hemoglobin subunit beta (HBB).